Reading from the N-terminus, the 132-residue chain is Ribosome-binding factor A (132 aa).

It belongs to the RbfA family. In terms of assembly, monomer. Binds 30S ribosomal subunits, but not 50S ribosomal subunits or 70S ribosomes.

It localises to the cytoplasm. Its function is as follows. One of several proteins that assist in the late maturation steps of the functional core of the 30S ribosomal subunit. Associates with free 30S ribosomal subunits (but not with 30S subunits that are part of 70S ribosomes or polysomes). Required for efficient processing of 16S rRNA. May interact with the 5'-terminal helix region of 16S rRNA. The sequence is that of Ribosome-binding factor A from Pseudomonas entomophila (strain L48).